A 293-amino-acid polypeptide reads, in one-letter code: Ribosomal protein L11 methyltransferase (293 aa).

S-adenosyl-L-methionine is bound by residues Thr145, Gly166, Asp188, and Asn230.

Belongs to the methyltransferase superfamily. PrmA family.

The protein resides in the cytoplasm. It carries out the reaction L-lysyl-[protein] + 3 S-adenosyl-L-methionine = N(6),N(6),N(6)-trimethyl-L-lysyl-[protein] + 3 S-adenosyl-L-homocysteine + 3 H(+). Methylates ribosomal protein L11. The protein is Ribosomal protein L11 methyltransferase of Klebsiella pneumoniae subsp. pneumoniae (strain ATCC 700721 / MGH 78578).